A 585-amino-acid chain; its full sequence is MAGUK p55 subfamily member 3 (585 aa).

L27 domains lie at 6-60 (EDSG…ERQS) and 61-118 (PTPV…FDPV). Residues 137-212 (IVRLVKNKEP…LAQSQGSITL (76 aa)) form the PDZ domain. One can recognise an SH3 domain in the interval 226 to 296 (ESKVFMRALF…PSKGFQERRL (71 aa)). Position 307 is a phosphoserine (S307). Residues 385–570 (PRLVVLIGSL…AYSQLKVVLE (186 aa)) enclose the Guanylate kinase-like domain.

Belongs to the MAGUK family. As to quaternary structure, interacts with HTR2C; this interaction stabilizes the receptor at the plasma membrane and prevents the desensitization of the HTR2C receptor-mediated calcium response. Interacts with HTR2A. Interacts with HTR4. Interacts (via PDZ domain) with CADM1 (via C-terminus)Interacts (via PDZ domain) with CADM1; this interaction connects CADM1 with DLG1. Interacts (via Guanylate kinase-like domain) with PALS1. Interacts with DLG1 (via N-terminus); this interaction connects CADM1 with DLG1 and links CADM1 with the regulatory subunit of phosphoinositide-3-kinase (PI3K) by forming a multiprotein complex and participates in cell spreading. As to expression, expressed in retina (at protein level) at the subapical region (SAR) adjacent to adherens junctions at the OLM, and at the OPL.

The protein localises to the cell membrane. Its subcellular location is the apical cell membrane. The protein resides in the cell junction. It localises to the adherens junction. Participates in cell spreading through the phosphoinositide-3-kinase (PI3K) pathway by connecting CADM1 to DLG1 and the regulatory subunit of phosphoinositide-3-kinase (PI3K). Stabilizes HTR2C at the plasma membrane and prevents its desensitization. May participates in the maintenance of adherens junctions. This chain is MAGUK p55 subfamily member 3, found in Homo sapiens (Human).